The primary structure comprises 289 residues: Undecaprenyl-diphosphatase (289 aa).

The next 8 membrane-spanning stretches (helical) occupy residues 23 to 43 (LFLGIIQGLTEFFPISSTAHL), 56 to 76 (GVAVTASLQLGSIIALIAYFW), 104 to 124 (SAIVLGTLPIVFAGMLIKLFW), 135 to 155 (IPAIAVVSIVMALLLLIAENV), 165 to 185 (LSFWDGQIIGFSQVLALIPGV), 210 to 230 (FLLGIPAITLAGLVELKQAFG), 235 to 255 (VDVFPLLLGITSSAISSWIAI), and 269 to 289 (IFITYRFLFGTLLLFWYYLAF).

Belongs to the UppP family.

Its subcellular location is the cell inner membrane. It catalyses the reaction di-trans,octa-cis-undecaprenyl diphosphate + H2O = di-trans,octa-cis-undecaprenyl phosphate + phosphate + H(+). Functionally, catalyzes the dephosphorylation of undecaprenyl diphosphate (UPP). Confers resistance to bacitracin. The chain is Undecaprenyl-diphosphatase from Prochlorococcus marinus (strain SARG / CCMP1375 / SS120).